A 444-amino-acid chain; its full sequence is Serine--tRNA ligase (444 aa).

249–251 (TAE) contacts L-serine. Residues 280 to 282 (RRE) and Val296 each bind ATP. Glu303 is a binding site for L-serine. 367–370 (EIVS) is an ATP binding site. An L-serine-binding site is contributed by Thr401.

Belongs to the class-II aminoacyl-tRNA synthetase family. Type-1 seryl-tRNA synthetase subfamily. Homodimer. The tRNA molecule binds across the dimer.

It localises to the cytoplasm. The catalysed reaction is tRNA(Ser) + L-serine + ATP = L-seryl-tRNA(Ser) + AMP + diphosphate + H(+). It catalyses the reaction tRNA(Sec) + L-serine + ATP = L-seryl-tRNA(Sec) + AMP + diphosphate + H(+). The protein operates within aminoacyl-tRNA biosynthesis; selenocysteinyl-tRNA(Sec) biosynthesis; L-seryl-tRNA(Sec) from L-serine and tRNA(Sec): step 1/1. Catalyzes the attachment of serine to tRNA(Ser). Is also able to aminoacylate tRNA(Sec) with serine, to form the misacylated tRNA L-seryl-tRNA(Sec), which will be further converted into selenocysteinyl-tRNA(Sec). The sequence is that of Serine--tRNA ligase from Picrophilus torridus (strain ATCC 700027 / DSM 9790 / JCM 10055 / NBRC 100828 / KAW 2/3).